The chain runs to 459 residues: Phosphoglucosamine mutase (459 aa).

The active-site Phosphoserine intermediate is the Ser102. Ser102, Asp243, Asp245, and Asp247 together coordinate Mg(2+). Phosphoserine is present on Ser102.

The protein belongs to the phosphohexose mutase family. Mg(2+) serves as cofactor. Activated by phosphorylation.

The enzyme catalyses alpha-D-glucosamine 1-phosphate = D-glucosamine 6-phosphate. Catalyzes the conversion of glucosamine-6-phosphate to glucosamine-1-phosphate. The chain is Phosphoglucosamine mutase from Bartonella henselae (strain ATCC 49882 / DSM 28221 / CCUG 30454 / Houston 1) (Rochalimaea henselae).